The following is a 481-amino-acid chain: GTPase Obg (481 aa).

Residues 2-159 enclose the Obg domain; it reads TTFVDRVVLH…LDAVLELKSV (158 aa). The region spanning 160-330 is the OBG-type G domain; it reads ADIGLVGYPS…LMFAMGELVA (171 aa). GTP contacts are provided by residues 166-173, 191-195, 212-215, 282-285, and 311-313; these read GYPSAGKS, FTTLV, DVPG, NKID, and SAA. Mg(2+)-binding residues include S173 and T193. Positions 348-426 constitute an OCT domain; the sequence is PKAVDDAGFT…IGEREFDWHP (79 aa). The interval 440–481 is disordered; it reads DQRLAEKTQRPSAAERLAARKARRQRPGDEPESDELDGDSGE. Residues 469-481 are compositionally biased toward acidic residues; that stretch reads EPESDELDGDSGE.

Belongs to the TRAFAC class OBG-HflX-like GTPase superfamily. OBG GTPase family. As to quaternary structure, monomer. It depends on Mg(2+) as a cofactor.

The protein resides in the cytoplasm. Its function is as follows. An essential GTPase which binds GTP, GDP and possibly (p)ppGpp with moderate affinity, with high nucleotide exchange rates and a fairly low GTP hydrolysis rate. Plays a role in control of the cell cycle, stress response, ribosome biogenesis and in those bacteria that undergo differentiation, in morphogenesis control. This is GTPase Obg from Salinispora arenicola (strain CNS-205).